We begin with the raw amino-acid sequence, 317 residues long: Aquaporin-2 (317 aa).

Residues 1–75 (MSLRDDLTIN…RSQEFKMQHR (75 aa)) are Cytoplasmic-facing. The chain crosses the membrane as a helical span at residues 76 to 96 (EFLAEFIGTLILVLLTCGFCA). At 97–108 (EQTLNIEKSKSW) the chain is on the extracellular side. Residues 109–129 (LTSSLGSGLSVLIGICVAGHV) form a helical membrane-spanning segment. Residues 130–154 (SGGHLNPAITIAFWVFSGFPIRKVP) are Cytoplasmic-facing. An NPA 1 motif is present at residues 135-137 (NPA). The chain crosses the membrane as a helical span at residues 155–175 (MYITAQLLGAFSGAALLYSIV). The Extracellular portion of the chain corresponds to 176–208 (EPAISQFDHGKRQILGELGTAGIFGTYPPLYVG). The chain crosses the membrane as a helical span at residues 209 to 229 (TGSAVASEVVGTAMLLLVVMV). The Cytoplasmic portion of the chain corresponds to 230–242 (TGHPNNLPFRTAQ). Residues 243–263 (GAMIALGVTTISLCIGYTSGF) form a helical membrane-spanning segment. Over 264-295 (SLNPARDFGPRLFTAVAGWGIDVFTVHHYYAL) the chain is Extracellular. An NPA 2 motif is present at residues 266 to 268 (NPA). A helical membrane pass occupies residues 296–316 (VPMFAPILGGLAGGFIYTVFI). Residue D317 is a topological domain, cytoplasmic.

It belongs to the MIP/aquaporin (TC 1.A.8) family.

Its subcellular location is the cell membrane. It carries out the reaction H2O(in) = H2O(out). The enzyme catalyses glycerol(in) = glycerol(out). Its function is as follows. Water channel required to facilitate the transport of water across membranes. Contributes to water uptake of spores during the early stages of spore germination. Aquaporins AQP1 and AQP2 act as extracellular pH sensors and enable the spores to hydrate under favorable conditions and to commence germination. Wounded vegetables and fruit present acidic pH, so the optimal pH range for germination is adapted to the relevant host pH. This chain is Aquaporin-2, found in Rhizopus delemar (strain RA 99-880 / ATCC MYA-4621 / FGSC 9543 / NRRL 43880) (Mucormycosis agent).